The following is a 193-amino-acid chain: Thymidine kinase (193 aa).

ATP is bound by residues 9-16 and 87-90; these read STMNAGKS and DEAN. Glu-88 serves as the catalytic Proton acceptor. Residues Cys-145, Cys-147, Cys-182, and His-185 each contribute to the Zn(2+) site.

The protein belongs to the thymidine kinase family. In terms of assembly, homotetramer.

Its subcellular location is the cytoplasm. The enzyme catalyses thymidine + ATP = dTMP + ADP + H(+). The polypeptide is Thymidine kinase (Agrobacterium fabrum (strain C58 / ATCC 33970) (Agrobacterium tumefaciens (strain C58))).